We begin with the raw amino-acid sequence, 1393 residues long: DNA-directed RNA polymerase subunit beta'' (1393 aa).

Zn(2+) contacts are provided by Cys-220, Cys-291, Cys-298, and Cys-301.

Belongs to the RNA polymerase beta' chain family. RpoC2 subfamily. As to quaternary structure, in plastids the minimal PEP RNA polymerase catalytic core is composed of four subunits: alpha, beta, beta', and beta''. When a (nuclear-encoded) sigma factor is associated with the core the holoenzyme is formed, which can initiate transcription. Zn(2+) serves as cofactor.

The protein resides in the plastid. It localises to the chloroplast. It carries out the reaction RNA(n) + a ribonucleoside 5'-triphosphate = RNA(n+1) + diphosphate. In terms of biological role, DNA-dependent RNA polymerase catalyzes the transcription of DNA into RNA using the four ribonucleoside triphosphates as substrates. The polypeptide is DNA-directed RNA polymerase subunit beta'' (Gossypium hirsutum (Upland cotton)).